The sequence spans 374 residues: Chaperone protein DnaJ (374 aa).

The J domain maps to 5-70 (DYYEVLGVNL…RKRASYDQFG (66 aa)). The segment at 133–210 (GLSRTIKVPT…CHGQGRQQQT (78 aa)) adopts a CR-type zinc-finger fold. Residues C146, C149, C162, C165, C184, C187, C198, and C201 each contribute to the Zn(2+) site. CXXCXGXG motif repeat units follow at residues 146-153 (CKTCNGSG), 162-169 (CPRCNGSG), 184-191 (CSVCRGRG), and 198-205 (CTDCHGQG).

It belongs to the DnaJ family. In terms of assembly, homodimer. Requires Zn(2+) as cofactor.

The protein localises to the cytoplasm. Functionally, participates actively in the response to hyperosmotic and heat shock by preventing the aggregation of stress-denatured proteins and by disaggregating proteins, also in an autonomous, DnaK-independent fashion. Unfolded proteins bind initially to DnaJ; upon interaction with the DnaJ-bound protein, DnaK hydrolyzes its bound ATP, resulting in the formation of a stable complex. GrpE releases ADP from DnaK; ATP binding to DnaK triggers the release of the substrate protein, thus completing the reaction cycle. Several rounds of ATP-dependent interactions between DnaJ, DnaK and GrpE are required for fully efficient folding. Also involved, together with DnaK and GrpE, in the DNA replication of plasmids through activation of initiation proteins. The chain is Chaperone protein DnaJ from Coxiella burnetii (strain RSA 331 / Henzerling II).